A 474-amino-acid chain; its full sequence is Glycogen synthase (474 aa).

An ADP-alpha-D-glucose-binding site is contributed by Lys-15.

Belongs to the glycosyltransferase 1 family. Bacterial/plant glycogen synthase subfamily.

The enzyme catalyses [(1-&gt;4)-alpha-D-glucosyl](n) + ADP-alpha-D-glucose = [(1-&gt;4)-alpha-D-glucosyl](n+1) + ADP + H(+). Its pathway is glycan biosynthesis; glycogen biosynthesis. In terms of biological role, synthesizes alpha-1,4-glucan chains using ADP-glucose. This Chlamydia trachomatis serovar A (strain ATCC VR-571B / DSM 19440 / HAR-13) protein is Glycogen synthase.